The chain runs to 666 residues: ATP-dependent zinc metalloprotease FtsH (666 aa).

Residues 1-6 (MKSETG) are Cytoplasmic-facing. The helical transmembrane segment at 7–27 (YMGFVVVLVFMVLLALQLATL) threads the bilayer. At 28–116 (SAPATQIAYS…TRYRGADDDT (89 aa)) the chain is on the periplasmic side. Residues 117 to 137 (WIGTLASWIVPIAVFALVWNL) traverse the membrane as a helical segment. Residues 138–666 (MLRRPRGGLQ…ADNADHSVPQ (529 aa)) lie on the Cytoplasmic side of the membrane. 210–217 (GAPGTGKT) provides a ligand contact to ATP. Zn(2+) is bound at residue H432. E433 is a catalytic residue. The Zn(2+) site is built by H436 and D509. Positions 612 to 666 (NDEPTPEPGARDPGGDAAKRSGIGAAPAKPPAEVGSAELRDPARKADNADHSVPQ) are disordered. Composition is skewed to basic and acidic residues over residues 620–630 (GARDPGGDAAK) and 649–666 (ELRD…SVPQ).

It in the central section; belongs to the AAA ATPase family. This sequence in the C-terminal section; belongs to the peptidase M41 family. As to quaternary structure, homohexamer. Zn(2+) serves as cofactor.

It is found in the cell inner membrane. Functionally, acts as a processive, ATP-dependent zinc metallopeptidase for both cytoplasmic and membrane proteins. Plays a role in the quality control of integral membrane proteins. The protein is ATP-dependent zinc metalloprotease FtsH of Burkholderia pseudomallei (strain 1710b).